A 244-amino-acid polypeptide reads, in one-letter code: Methanethiol S-methyltransferase (244 aa).

A run of 5 helical transmembrane segments spans residues 7–27 (IIYG…AIGF), 41–61 (IAAP…VFAV), 90–110 (LLAS…PAVI), 120–140 (VALW…TFMI), and 181–201 (GFVV…LFAI).

This sequence belongs to the nurim family.

It localises to the membrane. The catalysed reaction is methanethiol + S-adenosyl-L-methionine = dimethyl sulfide + S-adenosyl-L-homocysteine + H(+). Catalyzes the methylation of methanethiol (MeSH) to yield dimethylsulphide (DMS). The polypeptide is Methanethiol S-methyltransferase (Mycobacterium tuberculosis (strain ATCC 25618 / H37Rv)).